A 592-amino-acid chain; its full sequence is Potassium-transporting ATPase potassium-binding subunit (592 aa).

A run of 10 helical transmembrane segments spans residues 7–27, 60–80, 132–152, 175–195, 279–299, 310–330, 409–429, 449–469, 513–533, and 556–576; these read ILLGIFLVVLLLTVKPLGTYI, LKYACAILLFNVLGVLAVYAL, ALAVQNFFSAATGIVVVIALI, LHVLLPISIIYAVFLTGQGVI, LSNFIQMLSIFLIPAALCFTF, WAVLAAMTLMFVALAYTAMHF, GLYGMLVFAIMAVFIAGLMIG, IAILVTPLLVLVGTAIAVMLA, VMLGIAMWFGRFGVIVPVLAI, and LFVTLLIGTVLLVGLLNYVPA.

The protein belongs to the KdpA family. In terms of assembly, the system is composed of three essential subunits: KdpA, KdpB and KdpC.

The protein resides in the cell inner membrane. Functionally, part of the high-affinity ATP-driven potassium transport (or Kdp) system, which catalyzes the hydrolysis of ATP coupled with the electrogenic transport of potassium into the cytoplasm. This subunit binds the periplasmic potassium ions and delivers the ions to the membrane domain of KdpB through an intramembrane tunnel. The polypeptide is Potassium-transporting ATPase potassium-binding subunit (Dechloromonas aromatica (strain RCB)).